We begin with the raw amino-acid sequence, 366 residues long: Chorismate synthase (366 aa).

NADP(+) is bound by residues Arg48 and Arg54. FMN contacts are provided by residues Arg125–Ser127, Asn238–Ala239, Gly278, Lys293–Ser297, and Arg319.

Belongs to the chorismate synthase family. Homotetramer. The cofactor is FMNH2.

The catalysed reaction is 5-O-(1-carboxyvinyl)-3-phosphoshikimate = chorismate + phosphate. The protein operates within metabolic intermediate biosynthesis; chorismate biosynthesis; chorismate from D-erythrose 4-phosphate and phosphoenolpyruvate: step 7/7. Catalyzes the anti-1,4-elimination of the C-3 phosphate and the C-6 proR hydrogen from 5-enolpyruvylshikimate-3-phosphate (EPSP) to yield chorismate, which is the branch point compound that serves as the starting substrate for the three terminal pathways of aromatic amino acid biosynthesis. This reaction introduces a second double bond into the aromatic ring system. The chain is Chorismate synthase from Methylococcus capsulatus (strain ATCC 33009 / NCIMB 11132 / Bath).